We begin with the raw amino-acid sequence, 1257 residues long: MHHQQRLRANGGRGGTGLGAGSGPVSGGHSPLCAHCRGQLLPHPEEPIVMALGQQWHCDCFRCSVCEGHLHNWYFEREGLLYCREDYYGRFGDACQQCMAVITGPVMVAGEHKFHPECFCCTACGSFIGEGESYALVERSKLYCGQCYGKRSCQPADAKARITTAGKPMHSIRLVEIPKDATPGLRVDGVALDDGCPTVRITDLFCNFFLWLTSMAEQCCGAPYRIDVNLTNLHIGDRILEVNGTPVSDSSVEQIDKLIRSNEKMLQLTVEHDPVQVCRSCSQADIQRAMSASTLILPLSTSASSVEVGRERLYKTPGEQGTKARKLRQATNASTTIPPAAGATAMTQLKEKERCSSLSKLLDEQHQAQQHSAHPQLYDLSRTQSCRVVQKPQRIFRATDLVIGEKLGEGFFGKVFKVTHRQSGEVMVLKELHRADEEAQRNFIKEVAVLRLLDHRHVLKFIGVLYKDKKLHMVTEYVAGGCLKELIHDPAQVLPWPQRVRLARDIACGMSYLHSMNIIHRDLNSMNCLVREDRSVIVADFGLARSVDAPRLPSGNMTPGGYGSGANSDAPMSPSGTLRRSKSRQRRQRYTVVGNPYWMAPEMMKGLKYDEKVDVFSFGIMLCEIIGRVEADPDFMPRNSDFSLNQQEFREKFCAQCPEPFVKVAFVCCDLNPDMRPCFETLHVWLQRLADDLAADRVPPERLLHEIETFQEWYASSEDALSPTSQRSLNNLDELVKSAVDSEISPVEKEKENMVIKPQDIPKSPHLGKDFSPSGERLRDSMRARRRQRFLGAQEERRNLTPDTESKERALKKALKKCRPFGERGYLVDLRAGAELQLEDVRDLNTYSDVDSSCDTSLNYHDVNNLPAAQEDENTVKPGKEELLEESTNKPSNQESQHHRLAIDDMRTRLNQCRSKFEHLEEASRRNFNQSQHSMKNFFKTPPVALKMFQRLEHEAAALNGGNNCPPPPPRTQRINQTPIFGRKNPPVAIVGQKLQHAESLEDLASSGVAKQLATPAPKRSKATATTKGGQSSNPPLFLPPSLNISVALNSNGNVTTTTNTNSSCPPSASDWLPKKHKLTLPLPSAQQQRTSSNHRLPMCNNKGKTLKPLPSRTGSQGIPASNCVSPTRSSRPGSPTKHLAQRHTAATAQRLTNAAATHQQQHQQQSSKTTRLNILSPEKVHRLGARLTDQKQKMREEAAATASSVGGAGCAAGTAAGSLNGHRTIGSSGTPNSAVGERRRRAAPSPPVRTHFNTRC.

Residues 1–24 (MHHQQRLRANGGRGGTGLGAGSGP) are disordered. An interaction with LATS1 region spans residues 1–147 (MHHQQRLRAN…ERSKLYCGQC (147 aa)). Over residues 11 to 24 (GGRGGTGLGAGSGP) the composition is skewed to gly residues. 2 LIM zinc-binding domains span residues 31 to 93 (PLCA…RFGD) and 94 to 154 (ACQQ…RSCQ). The region spanning 174-274 (LVEIPKDATP…MLQLTVEHDP (101 aa)) is the PDZ domain. A Protein kinase domain is found at 401-686 (LVIGEKLGEG…PCFETLHVWL (286 aa)). Residues 407–415 (LGEGFFGKV) and K430 each bind ATP. D522 is an active-site residue. Disordered regions lie at residues 552–587 (LPSGNMTPGGYGSGANSDAPMSPSGTLRRSKSRQRR), 759–811 (QDIP…ERAL), and 881–900 (EELLEESTNKPSNQESQHHR). A compositionally biased stretch (basic and acidic residues) spans 794 to 811 (QEERRNLTPDTESKERAL). The residue at position 1000 (S1000) is a Phosphoserine. 3 disordered regions span residues 1010–1037 (AKQLATPAPKRSKATATTKGGQSSNPPL), 1085–1182 (SAQQ…EKVH), and 1212–1257 (AAGT…NTRC). Composition is skewed to polar residues over residues 1085–1095 (SAQQQRTSSNH) and 1113–1125 (RTGSQGIPASNCV). Low complexity-rich tracts occupy residues 1126-1137 (SPTRSSRPGSPT) and 1145-1166 (TAATAQRLTNAAATHQQQHQQQ).

This sequence belongs to the protein kinase superfamily. TKL Ser/Thr protein kinase family. In terms of assembly, interacts with LATS1, and this interaction inhibits phosphorylation of tsr/cofilin. Post-translationally, phosphorylated on serine and/or threonine residues by ROCK1. Phosphorylated by PAK4 resulting in increased LIMK1 ability to phosphorylate cofilin. May be dephosphorylated and inactivated by SSH1. As to expression, expressed throughout the imaginal disks of the eye, leg and wing.

Its subcellular location is the cytoplasm. The protein resides in the cleavage furrow. It is found in the midbody. It carries out the reaction L-seryl-[protein] + ATP = O-phospho-L-seryl-[protein] + ADP + H(+). The catalysed reaction is L-threonyl-[protein] + ATP = O-phospho-L-threonyl-[protein] + ADP + H(+). Protein kinase which regulates actin filament dynamics. Phosphorylates and inactivates the actin binding/depolymerizing factor tsr/cofilin, thereby stabilizing the actin cytoskeleton. Modulation of actin cytoskeleton dynamics may be essential for imaginal disk morphogenesis and axon guidance. In Drosophila melanogaster (Fruit fly), this protein is LIM domain kinase 1 (LIMK1).